The primary structure comprises 145 residues: Protein FimA (145 aa).

This sequence belongs to the fimbrial protein family.

It localises to the fimbrium. The sequence is that of Protein FimA (fimA) from Bordetella pertussis.